The sequence spans 367 residues: Prenyltransferase idtC (367 aa).

Positions 1-22 (MTTLAWFAGRSMVLDLAALTSA) are cleaved as a signal peptide. The segment covering 32–42 (TSTPTSTPTST) has biased composition (low complexity). Residues 32–84 (TSTPTSTPTSTDKAGTPPGSTIHHYGYPQGSVTKPNNSKTEKENGSPKDSKGN) are disordered. The N-linked (GlcNAc...) asparagine glycan is linked to Asn-67. Residues 70–82 (KTEKENGSPKDSK) are compositionally biased toward basic and acidic residues. His-132 lines the substrate pocket. 2 residues coordinate Mg(2+): Asp-139 and Asp-143. Residue Arg-148 participates in substrate binding. Asn-150 carries N-linked (GlcNAc...) asparagine glycosylation. Substrate is bound by residues Lys-233, Thr-234, Gln-264, Asn-271, and Lys-281.

This sequence belongs to the FPP/GGPP synthase family. Mg(2+) serves as cofactor.

Its pathway is secondary metabolite biosynthesis. Its function is as follows. Prenyltransferase; part of the gene cluster that mediates the biosynthesis of paspalitrems, indole-diterpene (IDT) mycotoxins that are potent tremorgens in mammals. The geranylgeranyl diphosphate (GGPP) synthase idtG is proposed to catalyze the first step in IDT biosynthesis via catalysis of a series of iterative condensations of isopentenyl diphosphate (IPP) with dimethylallyl diphosphate (DMAPP), geranyl diphosphate (GPP), and farnesyl diphosphate (FPP), to form GGPP. Condensation of indole-3-glycerol phosphate with GGPP by the prenyltransferase idtC then forms 3-geranylgeranylindole (3-GGI). Epoxidation of the two terminal alkenes of the geranylgeranyl moiety by the FAD-dependent monooxygenase idtM, and cyclization by the terpene cyclase idtB then leads to the production of paspaline. The cytochrome P450 monooxygenase idtP then catalyzes oxidative elimination of the pendant methyl group at C-12 of paspaline and generates the C-10 ketone to yield 13-desoxypaxilline. The cytochrome P450 monooxygenase idtQ may catalyze the C-13 oxidation of 13-desoxypaxilline to afford paxilline. Considering that both paspalicine and paxilline were detected in C.paspali, idtQ also catalyzes the formation of paspalinine from 13-desoxypaxilline via paspalicine as an intermediate. Finally, the alpha-prenyltransferase idtF prenylates paspalinine at the C-20 or the C-21 positions to yield paspalitrems A and C, respectively. The hydroxylation of paspalitrem A at C-32 by a still unknown oxidase affords paspalitrem B. The polypeptide is Prenyltransferase idtC (Claviceps paspali (Rye ergot fungus)).